We begin with the raw amino-acid sequence, 296 residues long: Diguanylate cyclase DgcS (296 aa).

The GGDEF domain maps to 165-293 (GSVSLIVLDL…GRNCYKLSPT (129 aa)). Residues D173, L174, and D216 each contribute to the Mg(2+) site. Residue D216 is part of the active site.

The cofactor is Mg(2+).

The catalysed reaction is 2 GTP = 3',3'-c-di-GMP + 2 diphosphate. Functionally, catalyzes the synthesis of cyclic-di-GMP (c-di-GMP) via the condensation of 2 GTP molecules. May be involved in the regulation of formation of solid surface-associated biofilms and pellicles according to environmental conditions. This Shewanella oneidensis (strain ATCC 700550 / JCM 31522 / CIP 106686 / LMG 19005 / NCIMB 14063 / MR-1) protein is Diguanylate cyclase DgcS.